Reading from the N-terminus, the 382-residue chain is Transcription termination/antitermination protein NusA (382 aa).

The S1 motif domain occupies 135–199; the sequence is EDIMTGIVQR…KGPQIMISRT (65 aa). A KH domain is found at 301–367; it reads EKTTQVIVPD…TLALDQETAD (67 aa). Positions 348–382 are disordered; that stretch reads LLEDEAASHETLALDQETADQPEATVETSKNHEEE.

This sequence belongs to the NusA family. In terms of assembly, monomer. Binds directly to the core enzyme of the DNA-dependent RNA polymerase and to nascent RNA.

It is found in the cytoplasm. In terms of biological role, participates in both transcription termination and antitermination. In Halalkalibacterium halodurans (strain ATCC BAA-125 / DSM 18197 / FERM 7344 / JCM 9153 / C-125) (Bacillus halodurans), this protein is Transcription termination/antitermination protein NusA.